Here is a 441-residue protein sequence, read N- to C-terminus: Xylose isomerase (441 aa).

Residues His99 and Asp102 contribute to the active site. Residues Glu230, Glu266, His269, Asp294, Asp305, Asp307, and Asp337 each coordinate Mg(2+).

It belongs to the xylose isomerase family. Homotetramer. The cofactor is Mg(2+).

It localises to the cytoplasm. The catalysed reaction is alpha-D-xylose = alpha-D-xylulofuranose. Exhibits xylose isomerase activity. The chain is Xylose isomerase (xylA) from Bacillus sp. (strain LW2).